We begin with the raw amino-acid sequence, 334 residues long: F420-dependent glucose-6-phosphate dehydrogenase (334 aa).

Position 38 (Asp-38) interacts with coenzyme F420-(gamma-Glu)n. His-39 (proton donor) is an active-site residue. Coenzyme F420-(gamma-Glu)n is bound by residues Thr-75 and 106-107; that span reads TG. Catalysis depends on Glu-108, which acts as the Proton acceptor. Residues Asn-111, 175–176, and 178–179 each bind coenzyme F420-(gamma-Glu)n; these read GG and LV. Thr-193, Lys-196, Lys-257, and Arg-281 together coordinate substrate.

The protein belongs to the F420-dependent glucose-6-phosphate dehydrogenase family. Homodimer.

The catalysed reaction is oxidized coenzyme F420-(gamma-L-Glu)(n) + D-glucose 6-phosphate + H(+) = 6-phospho-D-glucono-1,5-lactone + reduced coenzyme F420-(gamma-L-Glu)(n). Functionally, catalyzes the coenzyme F420-dependent oxidation of glucose 6-phosphate (G6P) to 6-phosphogluconolactone. In Kribbella flavida (strain DSM 17836 / JCM 10339 / NBRC 14399), this protein is F420-dependent glucose-6-phosphate dehydrogenase.